A 502-amino-acid chain; its full sequence is Protein O-glucosyltransferase 2 (502 aa).

The signal sequence occupies residues 1 to 19 (MFGTLLLYCFFLATVPALA). A Filamin repeat occupies 24 to 130 (ERQLSPEKSE…VAKSPYILKG (107 aa)). 2 N-linked (GlcNAc...) asparagine glycosylation sites follow: N302 and N414. A Prevents secretion from ER motif is present at residues 499-502 (KDEL).

Belongs to the KDELC family. N-glycosylated.

The protein resides in the endoplasmic reticulum lumen. It carries out the reaction L-seryl-[EGF-like domain protein] + UDP-alpha-D-glucose = 3-O-(beta-D-glucosyl)-L-seryl-[EGF-like domain protein] + UDP + H(+). The catalysed reaction is L-seryl-[EGF-like domain protein] + UDP-alpha-D-xylose = 3-O-(beta-D-xylosyl)-L-seryl-[EGF-like domain protein] + UDP + H(+). It participates in protein modification; protein glycosylation. Functionally, protein glucosyltransferase that catalyzes the transfer of glucose from UDP-glucose to a serine residue within the consensus sequence peptide C-X-N-T-X-G-S-F-X-C. Can also catalyze the transfer of xylose from UDP-xylose but less efficiently. Specifically targets extracellular EGF repeats of proteins such as NOTCH1, NOTCH3, FBN1, FBN2 and LTBP1. May regulate the transport of NOTCH1 and NOTCH3 to the plasma membrane and thereby the Notch signaling pathway. The protein is Protein O-glucosyltransferase 2 of Homo sapiens (Human).